The sequence spans 109 residues: Class I hydrophobin 2 (109 aa).

Positions 1–18 (MQFKLAFVSIALATLAVA) are cleaved as a signal peptide. 4 disulfide bridges follow: Cys-30–Cys-90, Cys-37–Cys-84, Cys-38–Cys-71, and Cys-91–Cys-104.

The protein belongs to the fungal hydrophobin family. As to quaternary structure, self-assembles to form functional amyloid fibrils called rodlets. Self-assembly into fibrillar rodlets occurs spontaneously at hydrophobic:hydrophilic interfaces and the rodlets further associate laterally to form amphipathic monolayers.

It localises to the secreted. The protein localises to the cell wall. Its function is as follows. Aerial growth, conidiation, and dispersal of filamentous fungi in the environment rely upon a capability of their secreting small amphipathic proteins called hydrophobins (HPBs) with low sequence identity. Class I can self-assemble into an outermost layer of rodlet bundles on aerial cell surfaces, conferring cellular hydrophobicity that supports fungal growth, development and dispersal; whereas Class II form highly ordered films at water-air interfaces through intermolecular interactions but contribute nothing to the rodlet structure. Hyd2 is a class I hydrophobin that may allow the dikaryotic mycelia to attach to the hydrophobic surface of the substrate. Higher expression in dikaryotic mycelia than in monokaryotic mycelia indicates that dikaryons require more hyd2 hydrophobin than the monokaryons, presumably for a higher rate of hyphal growth. The polypeptide is Class I hydrophobin 2 (Lentinula edodes (Shiitake mushroom)).